The sequence spans 809 residues: Acyl-homoserine lactone acylase QuiP (809 aa).

A signal peptide spans 1–26 (MASPAFSHFLPRFGVAAAVASALSLA). Residue Ser-261 is the Nucleophile of the active site.

This sequence belongs to the peptidase S45 family. Heterodimer of an alpha subunit and a beta subunit processed from the same precursor.

The protein resides in the periplasm. The catalysed reaction is an N-acyl-L-homoserine lactone + H2O = L-homoserine lactone + a carboxylate. Catalyzes the deacylation of acyl-homoserine lactone (AHL or acyl-HSL), releasing homoserine lactone (HSL) and the corresponding fatty acid. Possesses a specificity for the degradation of long-chain acyl-HSLs (side chains of seven or more carbons in length). This is Acyl-homoserine lactone acylase QuiP (quiP) from Pseudomonas fluorescens (strain ATCC BAA-477 / NRRL B-23932 / Pf-5).